Consider the following 201-residue polypeptide: Small ribosomal subunit protein uS4c (201 aa).

Residues 20 to 44 (GLTSKRPRAGSDLRNQSRSGKKSQY) form a disordered region. Positions 89 to 152 (MRLDNTLFRL…NSRTLVQNLL (64 aa)) constitute an S4 RNA-binding domain.

The protein belongs to the universal ribosomal protein uS4 family. As to quaternary structure, part of the 30S ribosomal subunit. Contacts protein S5. The interaction surface between S4 and S5 is involved in control of translational fidelity.

The protein resides in the plastid. It is found in the chloroplast. Its function is as follows. One of the primary rRNA binding proteins, it binds directly to 16S rRNA where it nucleates assembly of the body of the 30S subunit. In terms of biological role, with S5 and S12 plays an important role in translational accuracy. The chain is Small ribosomal subunit protein uS4c (rps4) from Aethionema grandiflorum (Persian stone-cress).